The following is a 414-amino-acid chain: Enolase (414 aa).

Gln-156 contacts (2R)-2-phosphoglycerate. Glu-200 acts as the Proton donor in catalysis. The Mg(2+) site is built by Asp-236, Glu-281, and Asp-308. The (2R)-2-phosphoglycerate site is built by Lys-333, Arg-362, Ser-363, and Lys-384. Lys-333 serves as the catalytic Proton acceptor.

Belongs to the enolase family. Requires Mg(2+) as cofactor.

It localises to the cytoplasm. The protein localises to the secreted. The protein resides in the cell surface. The catalysed reaction is (2R)-2-phosphoglycerate = phosphoenolpyruvate + H2O. The protein operates within carbohydrate degradation; glycolysis; pyruvate from D-glyceraldehyde 3-phosphate: step 4/5. In terms of biological role, catalyzes the reversible conversion of 2-phosphoglycerate (2-PG) into phosphoenolpyruvate (PEP). It is essential for the degradation of carbohydrates via glycolysis. The sequence is that of Enolase from Methanosphaera stadtmanae (strain ATCC 43021 / DSM 3091 / JCM 11832 / MCB-3).